Reading from the N-terminus, the 202-residue chain is Prostamide/prostaglandin F synthase (202 aa).

Residue Tyr108 is modified to Phosphotyrosine.

It belongs to the peroxiredoxin-like PRXL2 family. Prostamide/prostaglandin F synthase subfamily.

Its subcellular location is the cytoplasm. The protein resides in the cytosol. The enzyme catalyses prostaglandin H2 + [thioredoxin]-dithiol = prostaglandin F2alpha + [thioredoxin]-disulfide. The catalysed reaction is prostamide F2alpha + [thioredoxin]-disulfide = prostamide H2 + [thioredoxin]-dithiol. Its function is as follows. Catalyzes the reduction of prostaglandin-ethanolamide H(2) (prostamide H(2)) to prostamide F(2alpha) with NADPH as proton donor. Also able to reduce prostaglandin H(2) to prostaglandin F(2alpha). This is Prostamide/prostaglandin F synthase (PRXL2B) from Sus scrofa (Pig).